The following is a 315-amino-acid chain: Gamma-hemolysin component C (315 aa).

The N-terminal stretch at 1–29 (MLKNKILATTLSVSLLAPLANPLLENAKA) is a signal peptide.

It belongs to the aerolysin family. As to quaternary structure, toxicity requires sequential binding and synergistic association of a class S and a class F component which form heterooligomeric complexes. HlgC (class S) associates with HlgB (class F) thus forming an CB toxin.

In terms of biological role, toxin that seems to act by forming pores in the membrane of the cell. Has a hemolytic and a leucotoxic activity. This is Gamma-hemolysin component C (hlgC) from Staphylococcus aureus (strain Mu50 / ATCC 700699).